The following is a 338-amino-acid chain: Lipoate-protein ligase A (338 aa).

The BPL/LPL catalytic domain maps to 29–216; it reads PATQRVLFLW…AFFSHYGERV (188 aa). ATP is bound by residues Arg-71, 76-79, and Lys-134; that span reads GAVF. Lys-134 provides a ligand contact to (R)-lipoate.

It belongs to the LplA family. As to quaternary structure, monomer.

The protein localises to the cytoplasm. It carries out the reaction L-lysyl-[lipoyl-carrier protein] + (R)-lipoate + ATP = N(6)-[(R)-lipoyl]-L-lysyl-[lipoyl-carrier protein] + AMP + diphosphate + H(+). The protein operates within protein modification; protein lipoylation via exogenous pathway; protein N(6)-(lipoyl)lysine from lipoate: step 1/2. Its pathway is protein modification; protein lipoylation via exogenous pathway; protein N(6)-(lipoyl)lysine from lipoate: step 2/2. Its function is as follows. Catalyzes both the ATP-dependent activation of exogenously supplied lipoate to lipoyl-AMP and the transfer of the activated lipoyl onto the lipoyl domains of lipoate-dependent enzymes. This Klebsiella pneumoniae subsp. pneumoniae (strain ATCC 700721 / MGH 78578) protein is Lipoate-protein ligase A.